The chain runs to 173 residues: Crossover junction endodeoxyribonuclease RuvC (173 aa).

Residues Asp-8, Glu-67, and Asp-139 contribute to the active site. Mg(2+) is bound by residues Asp-8, Glu-67, and Asp-139.

Belongs to the RuvC family. Homodimer which binds Holliday junction (HJ) DNA. The HJ becomes 2-fold symmetrical on binding to RuvC with unstacked arms; it has a different conformation from HJ DNA in complex with RuvA. In the full resolvosome a probable DNA-RuvA(4)-RuvB(12)-RuvC(2) complex forms which resolves the HJ. It depends on Mg(2+) as a cofactor.

Its subcellular location is the cytoplasm. It carries out the reaction Endonucleolytic cleavage at a junction such as a reciprocal single-stranded crossover between two homologous DNA duplexes (Holliday junction).. In terms of biological role, the RuvA-RuvB-RuvC complex processes Holliday junction (HJ) DNA during genetic recombination and DNA repair. Endonuclease that resolves HJ intermediates. Cleaves cruciform DNA by making single-stranded nicks across the HJ at symmetrical positions within the homologous arms, yielding a 5'-phosphate and a 3'-hydroxyl group; requires a central core of homology in the junction. The consensus cleavage sequence is 5'-(A/T)TT(C/G)-3'. Cleavage occurs on the 3'-side of the TT dinucleotide at the point of strand exchange. HJ branch migration catalyzed by RuvA-RuvB allows RuvC to scan DNA until it finds its consensus sequence, where it cleaves and resolves the cruciform DNA. In Enterobacter sp. (strain 638), this protein is Crossover junction endodeoxyribonuclease RuvC.